The following is a 598-amino-acid chain: Arginine--tRNA ligase (598 aa).

The short motif at A139 to H149 is the 'HIGH' region element.

Belongs to the class-I aminoacyl-tRNA synthetase family. As to quaternary structure, monomer.

Its subcellular location is the cytoplasm. It carries out the reaction tRNA(Arg) + L-arginine + ATP = L-arginyl-tRNA(Arg) + AMP + diphosphate. This is Arginine--tRNA ligase from Bradyrhizobium sp. (strain BTAi1 / ATCC BAA-1182).